The chain runs to 547 residues: Chaperonin GroEL (547 aa).

Residues 30 to 33 (TLGP), Lys-51, 87 to 91 (DGTTT), Gly-415, and Asp-495 contribute to the ATP site.

This sequence belongs to the chaperonin (HSP60) family. As to quaternary structure, forms a cylinder of 14 subunits composed of two heptameric rings stacked back-to-back. Interacts with the co-chaperonin GroES.

It localises to the cytoplasm. It carries out the reaction ATP + H2O + a folded polypeptide = ADP + phosphate + an unfolded polypeptide.. In terms of biological role, together with its co-chaperonin GroES, plays an essential role in assisting protein folding. The GroEL-GroES system forms a nano-cage that allows encapsulation of the non-native substrate proteins and provides a physical environment optimized to promote and accelerate protein folding. This chain is Chaperonin GroEL, found in Allorhizobium ampelinum (strain ATCC BAA-846 / DSM 112012 / S4) (Agrobacterium vitis (strain S4)).